The sequence spans 699 residues: Zinc finger protein 782 (699 aa).

The KRAB domain occupies 8–79 (VSFQDVTVEF…EKEKGFLSRN (72 aa)). The interval 75 to 95 (FLSRNSPEDSQPDEISEKSPE) is disordered. The C2H2-type 1; degenerate zinc-finger motif lies at 279–307 (CFCRITHKTLTGGKSFSQKSHIREHHRVH). The segment at 316-332 (GKSFNRNSTLPVHQRTH) adopts a C2H2-type 2; degenerate zinc-finger fold. A C2H2-type 3; degenerate zinc finger spans residues 337 to 360 (YSDYHPCTETFSYQSTFSVHQKVH). Residues 366 to 388 (YEYNECGKSCSMNSHLIWPQKSH) form a C2H2-type 4; degenerate zinc finger. 11 C2H2-type zinc fingers span residues 394–416 (YECPECGKAFSEKSRLRKHQRTH), 422–444 (YKCDGCDKAFSAKSGLRIHQRTH), 450–472 (FECHECGKSFNYKSILIVHQRTH), 478–500 (FECNECGKSFSHMSGLRNHRRTH), 506–528 (YKCDECGKAFKLKSGLRKHHRTH), 534–556 (YKCNQCGKAFGQKSQLRGHHRIH), 562–584 (YKCNHCGEAFSQKSNLRVHHRTH), 590–612 (YQCEECGKTFRQKSNLRGHQRTH), 618–640 (YECNECGKAFSEKSVLRKHQRTH), 646–668 (YNCNQCGEAFSQKSNLRVHQRTH), and 674–696 (YKCDKCGRTFSQKSSLREHQKAH).

Belongs to the krueppel C2H2-type zinc-finger protein family.

It is found in the nucleus. Functionally, may be involved in transcriptional regulation. The sequence is that of Zinc finger protein 782 (ZNF782) from Homo sapiens (Human).